A 303-amino-acid polypeptide reads, in one-letter code: Guanosine-inosine kinase (303 aa).

It belongs to the carbohydrate kinase PfkB family. Homodimer. Mg(2+) is required as a cofactor.

It catalyses the reaction guanosine + ATP = GMP + ADP + H(+). The catalysed reaction is inosine + ATP = IMP + ADP + H(+). Its pathway is purine metabolism; IMP biosynthesis via salvage pathway; IMP from inosine: step 1/1. The protein operates within purine metabolism; GMP biosynthesis via salvage pathway. With respect to regulation, kinase activity is stimulated by pyrimidine nucleotides, especially CMP and CTP, and inhibited by AMP, ADP and GMP. Activity is stimulated by potassium or ammonium ions. Its function is as follows. Catalyzes the phosphorylation of guanosine and inosine to GMP and IMP, respectively. Can also use deoxyguanosine. Shows a strong preference for guanosine. dATP, GTP and dGTP can serve as phosphate donors. This chain is Guanosine-inosine kinase, found in Exiguobacterium acetylicum (Brevibacterium acetylicum).